Here is a 675-residue protein sequence, read N- to C-terminus: E3 ubiquitin-protein ligase COP1 (675 aa).

Residues 1–40 (MEEISTDPVVPAVKPDPRTSSVGEGANRHENDDGGSGGSE) are disordered. Zn(2+) contacts are provided by C52, C55, C67, H69, C72, C75, C86, and C89. An RING-type zinc finger spans residues 52-90 (CPICMQIIKDAFLTACGHSFCYMCIITHLRNKSDCPCCS). Residues 67–177 (CGHSFCYMCI…LDFLHCLRKQ (111 aa)) are CLS (cytoplasmic localization signal). Positions 120–177 (ASPLDQFREALQRGCDVSIKEVDNLLTLLAERKRKMEQEEAERNMQILLDFLHCLRKQ) are SNLS (subnuclear localization signal). A coiled-coil region spans residues 134 to 201 (CDVSIKEVDN…IKEDINAVER (68 aa)). A disordered region spans residues 261 to 290 (EGKAQGSSHGLPKKDALSGSDSQSLNQSTV). Over residues 279–290 (GSDSQSLNQSTV) the composition is skewed to polar residues. The Bipartite nuclear localization signal motif lies at 294-317 (RKKRIHAQFNDLQECYLQKRRQLA). WD repeat units follow at residues 369 to 408 (HSAN…NEPA), 418 to 458 (STRS…SLME), 461 to 501 (EHEK…SVIN), 503 to 543 (DMKA…QPLH), 547 to 585 (GHKK…PVRT), 588 to 627 (GHTN…PVTS), and 642 to 675 (AGSY…VLAA). Residues 593-595 (KNF) form a binding of human TRIB1 COP1-binding-motif region.

In terms of assembly, homodimer. Interacts with HY5, HYH, BBX24/STO, BBX25/STH, CIP8, COP10, SPA1, SPA2, SPA3, SPA4 and UVR8 and phosphorylated PHYA. Light induces dissociation of the SPA1/COP1 complex. Interacts with HRT/RPP8 and triggers it to the 26s proteasome. Binds to CRY2; this competitive interaction prevents triggering to proteasome of other binding proteins. Binds to SHW1 in the nucleus. Bonds to CIP7. Interacts with CSU2. Binds to CIP1. Interacts directly with DHU1. Associates to UNE10/PIF8. Binds directly to PCH1 and PCHL. Post-translationally, autoubiquitinated.

Its subcellular location is the nucleus. The protein resides in the cytoplasm. The catalysed reaction is S-ubiquitinyl-[E2 ubiquitin-conjugating enzyme]-L-cysteine + [acceptor protein]-L-lysine = [E2 ubiquitin-conjugating enzyme]-L-cysteine + N(6)-ubiquitinyl-[acceptor protein]-L-lysine.. It functions in the pathway protein modification; protein ubiquitination. In terms of biological role, E3 ubiquitin-protein ligase that acts as a repressor of photomorphogenesis and as an activator of etiolation in darkness. E3 ubiquitin ligases accept ubiquitin from an E2 ubiquitin-conjugating enzyme in the form of a thioester and then directly transfers the ubiquitin to targeted substrates. Represses photomorphogenesis in darkness by mediating ubiquitination and subsequent proteasomal degradation of light-induced transcription factors such as HY5, HYH and LAF1. Down-regulates MYB21, probably via ubiquitination process. Light stimuli abrogate the repression of photomorphogenesis, possibly due to its localization to the cytoplasm. Could play a role in switching between skotomorphogenetic and photomorphogenetic pathways. Mediates the ubiquitination-dependent degradation of HY5 in the darkness during seedling development (e.g. hypocotyl growth). Represses CIP7 in darkness. Triggers ubiquitination and subsequent protein degradation of UNE10/PIF8, PCH1 and PCHL in the dark. This Arabidopsis thaliana (Mouse-ear cress) protein is E3 ubiquitin-protein ligase COP1.